Consider the following 2260-residue polypeptide: Protein Ycf2 (2260 aa).

ATP is bound at residue 1614 to 1621; the sequence is GSIGTGRS.

This sequence belongs to the Ycf2 family.

The protein localises to the plastid. Its subcellular location is the chloroplast stroma. In terms of biological role, probable ATPase of unknown function. Its presence in a non-photosynthetic plant (Epifagus virginiana) and experiments in tobacco indicate that it has an essential function which is probably not related to photosynthesis. The protein is Protein Ycf2 of Dioscorea elephantipes (Elephant's foot yam).